A 574-amino-acid chain; its full sequence is DNA polymerase alpha subunit B (574 aa).

The protein belongs to the DNA polymerase alpha subunit B family. As to quaternary structure, component of the alpha DNA polymerase complex (also known as the alpha DNA polymerase-primase complex) consisting of four subunits: the catalytic subunit pol1, the accessory subunit spb70/pol12, and the primase complex subunits spp1/pri1 and spp2/pri2 respectively. Interacts with orc1. Interacts with orc2; the interaction occurs on the chromatin, is stable thoughout the cell cycle and is independent from spb70 role in the alpha DNA polymerase complex. Post-translationally, phosphorylated in a cell cycle-dependent manner.

Its subcellular location is the nucleus. It is found in the chromosome. In terms of biological role, accessory subunit of the DNA polymerase alpha complex (also known as the alpha DNA polymerase-primase complex) which plays an essential role in the initiation of DNA synthesis. During the S phase of the cell cycle, the DNA polymerase alpha complex (composed of a catalytic subunit pol1, an accessory subunit spb70/pol12 and two primase subunits, the catalytic subunit spp1/pri1 and the regulatory subunit spp2/pri2) is recruited to DNA at the replicative forks. The primase subunit of the polymerase alpha complex initiates DNA synthesis by oligomerising short RNA primers on both leading and lagging strands. This is DNA polymerase alpha subunit B from Schizosaccharomyces pombe (strain 972 / ATCC 24843) (Fission yeast).